The primary structure comprises 119 residues: MARVKGGVVSRKRRKRILKLAKGYYGAKHILFRTAKEQVMNSYYYAYRDRRQKKRDFRKLWITRINAAARLNGLSYSQLMHGLKLAEIEVNRKMLADLAVNDATAFTALADAAKAKLGK.

It belongs to the bacterial ribosomal protein bL20 family.

Functionally, binds directly to 23S ribosomal RNA and is necessary for the in vitro assembly process of the 50S ribosomal subunit. It is not involved in the protein synthesizing functions of that subunit. In Streptococcus gordonii (strain Challis / ATCC 35105 / BCRC 15272 / CH1 / DL1 / V288), this protein is Large ribosomal subunit protein bL20.